Here is a 566-residue protein sequence, read N- to C-terminus: Endoglucanase B (566 aa).

Residues 1–30 (MKKRRSSKVILSLAIVVALLAAVEPNAALA) form the signal peptide. Residue Glu177 is the Proton donor of the active site. The active-site Nucleophile is the Glu299.

This sequence belongs to the glycosyl hydrolase 5 (cellulase A) family.

It catalyses the reaction Endohydrolysis of (1-&gt;4)-beta-D-glucosidic linkages in cellulose, lichenin and cereal beta-D-glucans.. The sequence is that of Endoglucanase B (celB) from Paenibacillus lautus (Bacillus lautus).